The following is a 150-amino-acid chain: Galectin-2 (150 aa).

The 133-residue stretch at 9-141 (NQVKLQNDFK…FSSPVTVDVH (133 aa)) folds into the Galectin domain. The a carbohydrate site is built by His51, Arg55, Asn64, Glu75, and Arg77.

As to quaternary structure, homotetramer. Oligomerization is required for carbohydrate binding.

It localises to the secreted. It is found in the extracellular space. The protein resides in the extracellular matrix. Its subcellular location is the cell wall. The protein localises to the endomembrane system. In terms of biological role, binds lactose. May play a role in fruiting body formation. Displays toxicity towards the nematode C.elegans by binding to a specific Gal-beta-1,4-Fuc-alpha-1,6 modification of N-glycan cores on C.elegans intestinal cells. This Coprinopsis cinerea (Inky cap fungus) protein is Galectin-2 (Cgl2).